A 186-amino-acid polypeptide reads, in one-letter code: Peptidyl-tRNA hydrolase (186 aa).

Tyr14 is a tRNA binding site. The active-site Proton acceptor is the His19. TRNA is bound by residues Tyr61, Asn63, and Asn107.

The protein belongs to the PTH family. In terms of assembly, monomer.

The protein resides in the cytoplasm. The catalysed reaction is an N-acyl-L-alpha-aminoacyl-tRNA + H2O = an N-acyl-L-amino acid + a tRNA + H(+). Hydrolyzes ribosome-free peptidyl-tRNAs (with 1 or more amino acids incorporated), which drop off the ribosome during protein synthesis, or as a result of ribosome stalling. In terms of biological role, catalyzes the release of premature peptidyl moieties from peptidyl-tRNA molecules trapped in stalled 50S ribosomal subunits, and thus maintains levels of free tRNAs and 50S ribosomes. This Helicobacter pylori (strain HPAG1) protein is Peptidyl-tRNA hydrolase.